The primary structure comprises 291 residues: Ribosomal RNA small subunit methyltransferase H (291 aa).

S-adenosyl-L-methionine contacts are provided by residues 36-38 (GGH), aspartate 55, leucine 88, aspartate 102, and glutamine 109. The segment at 268–291 (KPTQEETKNNPRARSAKLRVAERI) is disordered.

It belongs to the methyltransferase superfamily. RsmH family.

It localises to the cytoplasm. It carries out the reaction cytidine(1402) in 16S rRNA + S-adenosyl-L-methionine = N(4)-methylcytidine(1402) in 16S rRNA + S-adenosyl-L-homocysteine + H(+). In terms of biological role, specifically methylates the N4 position of cytidine in position 1402 (C1402) of 16S rRNA. The chain is Ribosomal RNA small subunit methyltransferase H from Thermosipho melanesiensis (strain DSM 12029 / CIP 104789 / BI429).